The following is a 157-amino-acid chain: Ribosomal RNA large subunit methyltransferase H (157 aa).

S-adenosyl-L-methionine-binding positions include Leu73, Gly104, and 121–126; that span reads LSPLTL.

This sequence belongs to the RNA methyltransferase RlmH family. As to quaternary structure, homodimer.

Its subcellular location is the cytoplasm. It catalyses the reaction pseudouridine(1915) in 23S rRNA + S-adenosyl-L-methionine = N(3)-methylpseudouridine(1915) in 23S rRNA + S-adenosyl-L-homocysteine + H(+). In terms of biological role, specifically methylates the pseudouridine at position 1915 (m3Psi1915) in 23S rRNA. The sequence is that of Ribosomal RNA large subunit methyltransferase H from Acidithiobacillus ferrooxidans (strain ATCC 23270 / DSM 14882 / CIP 104768 / NCIMB 8455) (Ferrobacillus ferrooxidans (strain ATCC 23270)).